The following is a 122-amino-acid chain: MGVELAFPKVVGKQVYGSLYDCDENVLKDTKRLEQIIKEAADVGNMNILDIKSWKIGEGVSVVAIILESHITIHTWPEYKFATVDVYSCGPHTSPLKAFNYIVEKLGAKKYTINEADRSSEF.

Ser-69 (schiff-base intermediate with substrate; via pyruvic acid) is an active-site residue. Position 69 is a pyruvic acid (Ser); by autocatalysis (Ser-69). Residue His-74 is the Proton acceptor; for processing activity of the active site. The active-site Proton donor; for catalytic activity is the Cys-89.

This sequence belongs to the prokaryotic AdoMetDC family. Type 1 subfamily. In terms of assembly, heterotetramer of two alpha and two beta chains arranged as a dimer of alpha/beta heterodimers. Pyruvate serves as cofactor. In terms of processing, is synthesized initially as an inactive proenzyme. Formation of the active enzyme involves a self-maturation process in which the active site pyruvoyl group is generated from an internal serine residue via an autocatalytic post-translational modification. Two non-identical subunits are generated from the proenzyme in this reaction, and the pyruvate is formed at the N-terminus of the alpha chain, which is derived from the carboxyl end of the proenzyme. The post-translation cleavage follows an unusual pathway, termed non-hydrolytic serinolysis, in which the side chain hydroxyl group of the serine supplies its oxygen atom to form the C-terminus of the beta chain, while the remainder of the serine residue undergoes an oxidative deamination to produce ammonia and the pyruvoyl group blocking the N-terminus of the alpha chain.

It carries out the reaction S-adenosyl-L-methionine + H(+) = S-adenosyl 3-(methylsulfanyl)propylamine + CO2. Its pathway is amine and polyamine biosynthesis; S-adenosylmethioninamine biosynthesis; S-adenosylmethioninamine from S-adenosyl-L-methionine: step 1/1. Its function is as follows. Catalyzes the decarboxylation of S-adenosylmethionine to S-adenosylmethioninamine (dcAdoMet), the propylamine donor required for the synthesis of the polyamines spermine and spermidine from the diamine putrescine. The protein is S-adenosylmethionine decarboxylase proenzyme of Saccharolobus islandicus (strain L.S.2.15 / Lassen #1) (Sulfolobus islandicus).